A 107-amino-acid chain; its full sequence is Large ribosomal subunit protein bL21 (107 aa).

It belongs to the bacterial ribosomal protein bL21 family. As to quaternary structure, part of the 50S ribosomal subunit. Contacts protein L20.

Functionally, this protein binds to 23S rRNA in the presence of protein L20. The polypeptide is Large ribosomal subunit protein bL21 (Pseudothermotoga lettingae (strain ATCC BAA-301 / DSM 14385 / NBRC 107922 / TMO) (Thermotoga lettingae)).